The chain runs to 204 residues: Ribosomal RNA small subunit methyltransferase G (204 aa).

Residues Gly74, Leu79, 125–126, and Arg138 each bind S-adenosyl-L-methionine; that span reads AY.

Belongs to the methyltransferase superfamily. RNA methyltransferase RsmG family.

Its subcellular location is the cytoplasm. In terms of biological role, specifically methylates the N7 position of a guanine in 16S rRNA. In Brachyspira hyodysenteriae (strain ATCC 49526 / WA1), this protein is Ribosomal RNA small subunit methyltransferase G.